Reading from the N-terminus, the 242-residue chain is MQNIDQQELDKFEKMAKSWWDPQGDFKPIHQLNPLRLSYIAQQANGLTGKKVLDVGCGGGILSESMAKQGAIVTGIDMSSAPLQVARKHALESGLHIDYQQITIEEFLQNQTALFAERGEDEKFDVITCMEMLEHVPDPSSIIACCKQLLKPNGVIFFSTINRTLKAWALVIIGAEYVLKMLPKGTHDYDKFIKPAELLHWCDEAQLTCLDMVGYHYNPLTGKFWLNKDVSANYMASFRIQS.

S-adenosyl-L-methionine is bound by residues Arg-36, Gly-56, Asp-77, and Met-130.

The protein belongs to the methyltransferase superfamily. UbiG/COQ3 family.

The enzyme catalyses a 3-demethylubiquinol + S-adenosyl-L-methionine = a ubiquinol + S-adenosyl-L-homocysteine + H(+). It catalyses the reaction a 3-(all-trans-polyprenyl)benzene-1,2-diol + S-adenosyl-L-methionine = a 2-methoxy-6-(all-trans-polyprenyl)phenol + S-adenosyl-L-homocysteine + H(+). It participates in cofactor biosynthesis; ubiquinone biosynthesis. Its function is as follows. O-methyltransferase that catalyzes the 2 O-methylation steps in the ubiquinone biosynthetic pathway. The polypeptide is Ubiquinone biosynthesis O-methyltransferase (Pasteurella multocida (strain Pm70)).